The chain runs to 1305 residues: RNA-directed RNA polymerase (1305 aa).

Residues 563–814 (IIVGDLEATG…KTLIAPFSVE (252 aa)) form the RdRp catalytic domain.

Belongs to the reoviridae RNA-directed RNA polymerase family.

The catalysed reaction is RNA(n) + a ribonucleoside 5'-triphosphate = RNA(n+1) + diphosphate. In African horse sickness virus (AHSV), this protein is RNA-directed RNA polymerase (Segment-1).